Reading from the N-terminus, the 879-residue chain is Probable phospholipid transport protein YdbH (879 aa).

Topologically, residues 1–6 (MLGKYK) are cytoplasmic. A helical transmembrane segment spans residues 7-29 (AVLALLLLIILVPLTLLMTLGLW). The Periplasmic portion of the chain corresponds to 30–879 (VPTLAGIWLP…PQGKECEEKQ (850 aa)).

Interacts with the outer membrane lipoprotein YnbE.

The protein localises to the cell inner membrane. Involved in outer membrane lipid homeostasis. Interacts with the outer membrane lipoprotein YnbE to form a functional protein bridge connecting the inner and outer membranes of the cell. Likely transports phospholipids between the inner membrane and the outer membrane. It would provide a bridge-like structure that protects phospholipids as they travel across the periplasm. Its function is as follows. TamB, YdbH and YhdP are redundant, but not equivalent, in performing an essential function for growth and maintaining lipid homeostasis in the outer membrane. Any of these three proteins is sufficient for growth. This Escherichia coli (strain K12) protein is Probable phospholipid transport protein YdbH (ydbH).